Consider the following 320-residue polypeptide: Variant surface glycoprotein ILTAT 1.2 (320 aa).

Residues asparagine 146, asparagine 282, and asparagine 295 are each glycosylated (N-linked (GlcNAc...) asparagine). The tract at residues 297 to 320 (TKATENGVPVAQTQTGGSETTTEK) is disordered. Low complexity predominate over residues 308 to 320 (QTQTGGSETTTEK).

It localises to the cell membrane. Functionally, VSG forms a coat on the surface of the parasite. The trypanosome evades the immune response of the host by expressing a series of antigenically distinct VSGs from an estimated 1000 VSG genes. The polypeptide is Variant surface glycoprotein ILTAT 1.2 (Trypanosoma brucei brucei).